A 697-amino-acid polypeptide reads, in one-letter code: Zinc finger and BTB domain-containing protein 24 (697 aa).

The region spanning 10–133 is the BTB domain; it reads GQLVVHSDAH…AYTDFQNNHS (124 aa). A compositionally biased stretch (polar residues) spans 131–142; the sequence is NHSSPKPTTLNT. Disordered stretches follow at residues 131–176 and 209–254; these read NHSS…EEKS and EQIA…SRYS. Positions 159–171 form a DNA-binding region, a.T hook; it reads KRKRGRPKKVNTL. Basic and acidic residues predominate over residues 212 to 245; the sequence is AAKEKEESEPTCEPSREEEMPVEKDENYDPKTED. C2H2-type zinc fingers lie at residues 294–316, 322–344, 350–372, 378–400, 406–428, 434–456, 462–484, and 490–512; these read ARCKDCGKVFKYNHFLAIHQRSH, FKCNECGKGFAQKHSLQVHTRMH, YTCTVCSKALTTKHSLLEHMSLH, FTCDQCGKYFSQNRQLKSHYRVH, PECKDCHRKFMDVSQLKKHLRTH, FTCEICGKSFTAKSSLQTHIRIH, YSCGICGKSFSDSSAKRRHCILH, and FSCPECNLQFARLDNLKAHLKIH. The disordered stretch occupies residues 652-697; the sequence is QEQTEELHLATSTSDPAQHLQLTQEPGPPPPTHHVPQPTPLGQEQS. The span at 677-690 shows a compositional bias: pro residues; that stretch reads PGPPPPTHHVPQPT.

Belongs to the krueppel C2H2-type zinc-finger protein family. Interacts with MN1. As to expression, widely expressed, with highest levels in naive B-cells.

The protein localises to the nucleus. May be involved in BMP2-induced transcription. In Homo sapiens (Human), this protein is Zinc finger and BTB domain-containing protein 24 (ZBTB24).